The chain runs to 360 residues: UDP-N-acetylglucosamine--N-acetylmuramyl-(pentapeptide) pyrophosphoryl-undecaprenol N-acetylglucosamine transferase (360 aa).

UDP-N-acetyl-alpha-D-glucosamine is bound by residues 13–15 (TGG), Arg164, Ser192, and Gln293.

It belongs to the glycosyltransferase 28 family. MurG subfamily.

The protein localises to the cell inner membrane. It catalyses the reaction di-trans,octa-cis-undecaprenyl diphospho-N-acetyl-alpha-D-muramoyl-L-alanyl-D-glutamyl-meso-2,6-diaminopimeloyl-D-alanyl-D-alanine + UDP-N-acetyl-alpha-D-glucosamine = di-trans,octa-cis-undecaprenyl diphospho-[N-acetyl-alpha-D-glucosaminyl-(1-&gt;4)]-N-acetyl-alpha-D-muramoyl-L-alanyl-D-glutamyl-meso-2,6-diaminopimeloyl-D-alanyl-D-alanine + UDP + H(+). It functions in the pathway cell wall biogenesis; peptidoglycan biosynthesis. Functionally, cell wall formation. Catalyzes the transfer of a GlcNAc subunit on undecaprenyl-pyrophosphoryl-MurNAc-pentapeptide (lipid intermediate I) to form undecaprenyl-pyrophosphoryl-MurNAc-(pentapeptide)GlcNAc (lipid intermediate II). The sequence is that of UDP-N-acetylglucosamine--N-acetylmuramyl-(pentapeptide) pyrophosphoryl-undecaprenol N-acetylglucosamine transferase from Chromobacterium violaceum (strain ATCC 12472 / DSM 30191 / JCM 1249 / CCUG 213 / NBRC 12614 / NCIMB 9131 / NCTC 9757 / MK).